The primary structure comprises 105 residues: Ig lambda chain C region (105 aa).

The 99-residue stretch at 2 to 100 folds into the Ig-like domain; the sequence is PKAAPTVNLF…EGTIVEKTVT (99 aa). A disulfide bond links C27 and C86.

The sequence is that of Ig lambda chain C region from Sus scrofa (Pig).